The primary structure comprises 748 residues: Catalase-peroxidase (748 aa).

Residues 96-229 constitute a cross-link (tryptophyl-tyrosyl-methioninium (Trp-Tyr) (with M-255)); the sequence is WHSAGTYRVA…LAAAHMGLIY (134 aa). The active-site Proton acceptor is His97. The segment at residues 229–255 is a cross-link (tryptophyl-tyrosyl-methioninium (Tyr-Met) (with W-96)); the sequence is YVNPEGPDGNPDPIAAAKDIRTTFGRM. His270 contacts heme b.

The protein belongs to the peroxidase family. Peroxidase/catalase subfamily. As to quaternary structure, homodimer or homotetramer. Heme b is required as a cofactor. Formation of the three residue Trp-Tyr-Met cross-link is important for the catalase, but not the peroxidase activity of the enzyme.

The protein resides in the cytoplasm. The catalysed reaction is H2O2 + AH2 = A + 2 H2O. The enzyme catalyses 2 H2O2 = O2 + 2 H2O. In terms of biological role, bifunctional enzyme with both catalase and broad-spectrum peroxidase activity. Plays a crucial role in oxidative stress response during infection. Acts as an antigen and elicits antibody response in P.marneffei-infected AIDS patients, healthy people working in mycological laboratory, and healthy people in an endemic area. This Talaromyces marneffei (Penicillium marneffei) protein is Catalase-peroxidase.